A 187-amino-acid polypeptide reads, in one-letter code: Ribosome-recycling factor (187 aa).

Belongs to the RRF family.

The protein resides in the cytoplasm. Its function is as follows. Responsible for the release of ribosomes from messenger RNA at the termination of protein biosynthesis. May increase the efficiency of translation by recycling ribosomes from one round of translation to another. The polypeptide is Ribosome-recycling factor (Bradyrhizobium sp. (strain BTAi1 / ATCC BAA-1182)).